A 303-amino-acid chain; its full sequence is DnaJ homolog subfamily C member 17 (303 aa).

One can recognise a J domain in the interval 11–76 (DLYALLGIEE…AARAAYDKVR (66 aa)). Composition is skewed to basic and acidic residues over residues 78–106 (ARKQ…RERQ) and 150–166 (IRQD…ENTE). Disordered regions lie at residues 78 to 124 (ARKQ…TTTL) and 150 to 170 (IRQD…GKGT). In terms of domain architecture, RRM spans 178 to 249 (KCKKEDESQG…NPLKVSWLEG (72 aa)). Lysine 264 carries the post-translational modification N6-methyllysine.

It is found in the cytoplasm. Its subcellular location is the nucleus. Its function is as follows. May negatively affect PAX8-induced thyroglobulin/TG transcription. This chain is DnaJ homolog subfamily C member 17 (Dnajc17), found in Rattus norvegicus (Rat).